A 694-amino-acid chain; its full sequence is MGKAKNKKKFLKNRKQVLVPGTLFVHSRKGFGFVSPDQPELYPFDIFISASDLKGALDGDHVLVALPFSLRGGEKRKGVIHKVLSRGKTVLVGTIVSLINPTLAMVYVNTIGPEHPLKAELLPKRTYKLGDRLLLKTPVWKENYPSREPPPLAMLEFIGNISNAKTDFPVIKAEFSITEEFPDAVVQEASQFLQKHVTQALHSRKDLRDLLCFTIDSSSAKDFDDAVSLTYDHEGNYILGVHIADVSHYVTPNSALDREAAKRCNSIYFPGKVIPMLPSALSDNLCSLKPNVDRLAVSVFMTFSKEGFLSDYRILRSVIRSKYRMTYDEVDEIIEKKQTHPISKTILKMAELSRIFSDIREQRGCTRLVLPSFTMSLDNLQEPVALIENKQTAAHKLIEEFMLKANEVIAYHISHQGITMPFRTHEPPNEESLLVFQETAKAMGFTITQTPAQEPDYQYLLQETTAGHPLEPILHSQFVRSMKTASYSTENKGHYGLCLDYYTHFTSPIRRYVDLIVHRLLFHPLSVEEEHLEQIVRACSSQERIAAKAEGAFVNIKKARFLKKFIEEQPATLYKAFIITASPEGISFVLPEFCHEGFIPAAKLPQAYVLQTKIGLEELPEHLRPGAVISVQLASVTLLTQSIEWTLVEATTKAKAKRTSKKKKTESVTTKEKKKSPAKKKKGATKTKKGSGKN.

The 322-residue stretch at 204-525 (RKDLRDLLCF…IVHRLLFHPL (322 aa)) folds into the RNB domain. An S1 motif domain is found at 571-648 (ATLYKAFIIT…LTQSIEWTLV (78 aa)). Positions 652–694 (TKAKAKRTSKKKKTESVTTKEKKKSPAKKKKGATKTKKGSGKN) are disordered. 2 stretches are compositionally biased toward basic residues: residues 654 to 664 (AKAKRTSKKKK) and 672 to 694 (EKKKSPAKKKKGATKTKKGSGKN).

The protein belongs to the RNR ribonuclease family. RNase R subfamily.

Its subcellular location is the cytoplasm. It catalyses the reaction Exonucleolytic cleavage in the 3'- to 5'-direction to yield nucleoside 5'-phosphates.. Its function is as follows. 3'-5' exoribonuclease that releases 5'-nucleoside monophosphates and is involved in maturation of structured RNAs. The polypeptide is Ribonuclease R (Chlamydia trachomatis serovar D (strain ATCC VR-885 / DSM 19411 / UW-3/Cx)).